Consider the following 930-residue polypeptide: Nonribosomal peptide synthetase btyA (930 aa).

The interval 31 to 440 (ESPHRLTYAE…RGRSKELICI (410 aa)) is adenylation (A) domain. Residues 570 to 647 (PAGNETETLL…VLARQLQDGH (78 aa)) enclose the Carrier domain. Ser607 carries the post-translational modification O-(pantetheine 4'-phosphoryl)serine. Positions 667 to 920 (PLWLIHPIGG…EDNVHKVYRV (254 aa)) are thioesterase (TE) domain.

Belongs to the NRP synthetase family.

It catalyses the reaction 2 3-(4-hydroxyphenyl)pyruvate + H(+) = (2S)-2-(4-hydoxybenzyl)-3-(4-hydroxyphenyl)-2-furonol carboxylate + H2O. The protein operates within secondary metabolite biosynthesis. In terms of biological role, nonribosomal peptide synthetase; part of the gene cluster that mediates the biosynthesis of butyrolactones, natural products that show a wide range of biological activities such as antitumor, antiparasitic or anti-inflammatory activity. The nonribosomal peptide synthetase btyA is responsible for the production of butyrolactone II, the core structure of butyrolactones. BtyA first activates 4-hydroxyphenylpyruvate (HPPA) through its A domain to AMP-HPPA. The HPPA unit is then loaded to the T domain and eventually transferred to the TE domain. Upon loading of another HPPA unit to the T domain, the TE domain promotes the enolate formation on the unit attached. Then aldol condensation establishes the carbon-carbon bond between the two units, followed by ester cyclization, and keto-enol tautomerization to yield the gamma-butyrolactone core. Hydrolysis, and finally esterification of the exposed carboxylic acid group yields butyrolactone II. Two additional enzymes, a prenyltransferase and an epoxidase, may be involved in the tailoring modifications of butyrolactone II to give butyrolactone III and butyrolactone I. The sequence is that of Nonribosomal peptide synthetase btyA from Aspergillus terreus (strain NIH 2624 / FGSC A1156).